The primary structure comprises 335 residues: tRNA N6-adenosine threonylcarbamoyltransferase (335 aa).

A divalent metal cation is bound by residues His109, His113, and Tyr130. Substrate is bound by residues 130–134, Asp162, Gly177, Glu181, and Asn266; that span reads YVSGG. Asp294 provides a ligand contact to a divalent metal cation.

Belongs to the KAE1 / TsaD family. Component of the EKC/KEOPS complex composed of at least tp53rk, tprkb, osgep and lage3; the whole complex dimerizes. A divalent metal cation serves as cofactor.

The protein resides in the cytoplasm. Its subcellular location is the nucleus. The enzyme catalyses L-threonylcarbamoyladenylate + adenosine(37) in tRNA = N(6)-L-threonylcarbamoyladenosine(37) in tRNA + AMP + H(+). In terms of biological role, component of the EKC/KEOPS complex that is required for the formation of a threonylcarbamoyl group on adenosine at position 37 (t(6)A37) in tRNAs that read codons beginning with adenine. The complex is probably involved in the transfer of the threonylcarbamoyl moiety of threonylcarbamoyl-AMP (TC-AMP) to the N6 group of A37. OSGEP likely plays a direct catalytic role in this reaction, but requires other protein(s) of the complex to fulfill this activity. In Danio rerio (Zebrafish), this protein is tRNA N6-adenosine threonylcarbamoyltransferase.